The chain runs to 80 residues: Protein OPG051 (80 aa).

Belongs to the orthopoxvirus OPG051 family.

The chain is Protein OPG051 (OPG051) from Vaccinia virus (strain Western Reserve) (VACV).